The chain runs to 879 residues: Alanine--tRNA ligase (879 aa).

Zn(2+) is bound by residues His566, His570, Cys668, and His672.

This sequence belongs to the class-II aminoacyl-tRNA synthetase family. The cofactor is Zn(2+).

The protein localises to the cytoplasm. It carries out the reaction tRNA(Ala) + L-alanine + ATP = L-alanyl-tRNA(Ala) + AMP + diphosphate. In terms of biological role, catalyzes the attachment of alanine to tRNA(Ala) in a two-step reaction: alanine is first activated by ATP to form Ala-AMP and then transferred to the acceptor end of tRNA(Ala). Also edits incorrectly charged Ser-tRNA(Ala) and Gly-tRNA(Ala) via its editing domain. The chain is Alanine--tRNA ligase from Listeria welshimeri serovar 6b (strain ATCC 35897 / DSM 20650 / CCUG 15529 / CIP 8149 / NCTC 11857 / SLCC 5334 / V8).